The following is a 353-amino-acid chain: MDEINFAVLGTGGIGRRTLEVSTYKDGLTPVAACDRHGVAVNHDGLDVEEILDATEGNIAGDGTGDTEDKRVTDGGAAVKQHGDGAGIVASAQGTSTETPIDEIIAESDEIDAVLLALPNLEHDFIPRIAERFAEAEFEGVLIDVLKRSRVIGMLDDREETLVESGITFVCGAGATPGLLTGAAALAAQSFVEVEEVEIWWGVGLKSGYEDNRGTVREDIAHLDGYDIETAREMDESEIEAVIEEHDGVLEFNDMEHADDVLLERAGICDAEDVTVGGILDIRKDEKPTTTTVRVTGRTFDGKRGTNTFQLDDATSMAANVNGPALGYLKSAVRRNRAGDYGVFGPAELMPGF.

Position 10 to 14 (10 to 14 (GTGGI)) interacts with NAD(+). The Nucleophile role is filled by Lys-147. Lys-147 is subject to Allysine. 214–215 (GT) contacts NAD(+). Glu-218 serves as the catalytic Proton acceptor. His-222 serves as the catalytic Proton donor and proton acceptor.

This sequence belongs to the BioU family. In terms of assembly, monomer.

The catalysed reaction is (8S)-8-amino-7-oxononanoate + L-lysyl-[protein] + CO2 = (S)-2-amino-6-oxohexanoyl-[protein] + (7R,8S)-8-amino-7-(carboxyamino)nonanoate + 2 H(+). It catalyses the reaction (8S)-8-amino-7-oxononanoate + L-lysyl-[protein] + NADPH + H(+) = N(6)-[(2S,3R)-2-amino-8-carboxyoctan-3-yl]-L-lysyl-[protein] + NADP(+) + H2O. The enzyme catalyses N(6)-[(2S,3R)-2-amino-8-carboxyoctan-3-yl]-L-lysyl-[protein] + CO2 + NADP(+) + H2O = (S)-2-amino-6-oxohexanoyl-[protein] + (7R,8S)-8-amino-7-(carboxyamino)nonanoate + NADPH + 3 H(+). It carries out the reaction (8S)-8-amino-7-oxononanoate + L-lysyl-[protein] + NADH + H(+) = N(6)-[(2S,3R)-2-amino-8-carboxyoctan-3-yl]-L-lysyl-[protein] + NAD(+) + H2O. The catalysed reaction is N(6)-[(2S,3R)-2-amino-8-carboxyoctan-3-yl]-L-lysyl-[protein] + CO2 + NAD(+) + H2O = (S)-2-amino-6-oxohexanoyl-[protein] + (7R,8S)-8-amino-7-(carboxyamino)nonanoate + NADH + 3 H(+). It functions in the pathway cofactor biosynthesis; biotin biosynthesis. Its function is as follows. A 'suicide' enzyme that participates in biotin synthesis. Catalyzes the formation of (S)-8-amino-7-oxononanoate (DAN-carbamic acid) from (7R,8S)-8-amino-7-(carboxyamino)nonanoate (DAN), a function equivalent to the cannonical BioA reaction and the first half-reaction of BioD. The cellular requirement for biotin is thought be low enough that this single turnover enzyme supplies a sufficient amount of the cofactor. Overall it catalyzes three reactions: formation of a covalent linkage with 8-amino-7-oxononanoate to yield a BioU-DAN conjugate at the epsilon-amino group of Lys124 of BioU using NAD(P)H, carboxylation of the conjugate to form BioU-DAN-carbamic acid, and release of DAN-carbamic acid using NAD(P)+. Complements a bioA deletion in E.coli. The sequence is that of (S)-8-amino-7-oxononanoate synthase BioU from Haloferax mediterranei (strain ATCC 33500 / DSM 1411 / JCM 8866 / NBRC 14739 / NCIMB 2177 / R-4) (Halobacterium mediterranei).